The following is a 206-amino-acid chain: Ribonuclease HII (206 aa).

Residues 27-206 (ARIAGVDEAG…CALHRRSFKH (180 aa)) form the RNase H type-2 domain. The a divalent metal cation site is built by D33, E34, and D125.

The protein belongs to the RNase HII family. Requires Mn(2+) as cofactor. The cofactor is Mg(2+).

Its subcellular location is the cytoplasm. The catalysed reaction is Endonucleolytic cleavage to 5'-phosphomonoester.. In terms of biological role, endonuclease that specifically degrades the RNA of RNA-DNA hybrids. The polypeptide is Ribonuclease HII (Moorella thermoacetica (strain ATCC 39073 / JCM 9320)).